The following is a 114-amino-acid chain: Ig kappa chain V region AH80-5 (114 aa).

The segment at I1–C22 is framework-1. Positions Q23–S35 are complementarity-determining-1. The framework-2 stretch occupies residues W36 to Y50. Residues Y51–S57 form a complementarity-determining-2 region. The tract at residues G58–C93 is framework-3. The tract at residues Q94–A103 is complementarity-determining-3. A framework-4 region spans residues F104–K113.

This Oryctolagus cuniculus (Rabbit) protein is Ig kappa chain V region AH80-5.